The primary structure comprises 232 residues: tRNA (guanine-N(1)-)-methyltransferase (232 aa).

Residues Gly-112 and 132–137 each bind S-adenosyl-L-methionine; that span reads IGDYVL.

It belongs to the RNA methyltransferase TrmD family. In terms of assembly, homodimer.

It is found in the cytoplasm. It carries out the reaction guanosine(37) in tRNA + S-adenosyl-L-methionine = N(1)-methylguanosine(37) in tRNA + S-adenosyl-L-homocysteine + H(+). Functionally, specifically methylates guanosine-37 in various tRNAs. The chain is tRNA (guanine-N(1)-)-methyltransferase from Anaplasma phagocytophilum (strain HZ).